The sequence spans 462 residues: Glycerol-3-phosphate dehydrogenase [NAD(+)] GPDHC1, cytosolic (462 aa).

Residues 48 to 53 (GAGAWG), K196, and A235 contribute to the NAD(+) site. Residue K196 coordinates substrate. K285 functions as the Proton acceptor in the catalytic mechanism. NAD(+) is bound by residues R347 and Q375. Residue 347–348 (RN) coordinates substrate.

It belongs to the NAD-dependent glycerol-3-phosphate dehydrogenase family. As to expression, expressed in roots, leaves, flowers and siliques.

It localises to the cytoplasm. The protein resides in the cytosol. It catalyses the reaction sn-glycerol 3-phosphate + NAD(+) = dihydroxyacetone phosphate + NADH + H(+). Functionally, involved in cell redox homeostasis. Required for maintaining a steady state cellular NADH/NAD(+) ratio through a mitochondrial glycerol-3-phosphate redox shuttle. May function with the mitochondrial FAD-dependent glycerol-3-phosphate dehydrogenase SDP6 to shuttle reducing equivalents into the mitochondria for respiration. The polypeptide is Glycerol-3-phosphate dehydrogenase [NAD(+)] GPDHC1, cytosolic (GPDHC1) (Arabidopsis thaliana (Mouse-ear cress)).